The chain runs to 261 residues: Indole-3-glycerol phosphate synthase (261 aa).

The protein belongs to the TrpC family.

It carries out the reaction 1-(2-carboxyphenylamino)-1-deoxy-D-ribulose 5-phosphate + H(+) = (1S,2R)-1-C-(indol-3-yl)glycerol 3-phosphate + CO2 + H2O. It participates in amino-acid biosynthesis; L-tryptophan biosynthesis; L-tryptophan from chorismate: step 4/5. The protein is Indole-3-glycerol phosphate synthase of Burkholderia pseudomallei (strain 1106a).